A 124-amino-acid polypeptide reads, in one-letter code: Large ribosomal subunit protein uL18 (124 aa).

The protein belongs to the universal ribosomal protein uL18 family. As to quaternary structure, part of the 50S ribosomal subunit; part of the 5S rRNA/L5/L18/L25 subcomplex. Contacts the 5S and 23S rRNAs.

This is one of the proteins that bind and probably mediate the attachment of the 5S RNA into the large ribosomal subunit, where it forms part of the central protuberance. This Frankia casuarinae (strain DSM 45818 / CECT 9043 / HFP020203 / CcI3) protein is Large ribosomal subunit protein uL18.